The following is a 23-amino-acid chain: Cytochrome c oxidase subunit 7A1, mitochondrial (23 aa).

It belongs to the cytochrome c oxidase VIIa family. As to quaternary structure, component of the complex IV (CIV, cytochrome c oxidase), a multisubunit enzyme composed of 14 subunits. The complex is composed of a catalytic core of 3 subunits MT-CO1, MT-CO2 and MT-CO3, encoded in the mitochondrial DNA, and 11 supernumerary subunits COX4I1 (or COX4I2), COX5A, COX5B, COX6A2 (or COX6A1), COX6B1 (or COX6B2), COX6C, COX7A1 (or COX7A2), COX7B, COX7C, COX8B and NDUFA4, which are encoded in the nuclear genome. The complex exists as a monomer or a dimer and forms supercomplexes (SCs) in the inner mitochondrial membrane with NADH-ubiquinone oxidoreductase (complex I, CI) and ubiquinol-cytochrome c oxidoreductase (cytochrome b-c1 complex, complex III, CIII), resulting in different assemblies (supercomplex SCI(1)III(2)IV(1) and megacomplex MCI(2)III(2)IV(2)).

It localises to the mitochondrion inner membrane. It participates in energy metabolism; oxidative phosphorylation. Its function is as follows. Component of the mitochondrial respiratory complex IV (CIV, also named cytochrome c oxidase complex), the last enzyme in the mitochondrial electron transport chain which drives oxidative phosphorylation. The CIV complex is the component of the respiratory chain that catalyzes the reduction of oxygen to water. Acts as an assembly factor that specifically drives the homodimerization of CIV complexes, mediating the formation of mitochondrial respiratory supercomplexes (respirasomes) containing two CIV: supercomplxes with two molecules of CIV show improved activity. Despite being highly expressed in brown adipose tissue, not required for thermogenesis. In Canis lupus familiaris (Dog), this protein is Cytochrome c oxidase subunit 7A1, mitochondrial (COX7A1).